The following is a 227-amino-acid chain: Uridylate kinase (227 aa).

Position 9 to 10 (9 to 10 (GS)) interacts with ATP. Gly-44 contacts UMP. ATP-binding residues include Gly-45 and Arg-49. Residues Asp-66 and 114 to 120 (TVPGHTT) contribute to the UMP site. ATP-binding residues include Thr-140, Phe-146, and Asp-149.

Belongs to the UMP kinase family. In terms of assembly, homohexamer.

The protein resides in the cytoplasm. It carries out the reaction UMP + ATP = UDP + ADP. It participates in pyrimidine metabolism; CTP biosynthesis via de novo pathway; UDP from UMP (UMPK route): step 1/1. Its activity is regulated as follows. Inhibited by UTP. Functionally, catalyzes the reversible phosphorylation of UMP to UDP. This is Uridylate kinase from Natronomonas pharaonis (strain ATCC 35678 / DSM 2160 / CIP 103997 / JCM 8858 / NBRC 14720 / NCIMB 2260 / Gabara) (Halobacterium pharaonis).